An 81-amino-acid polypeptide reads, in one-letter code: Cytotoxin 5 (81 aa).

The N-terminal stretch at 1–21 (MKTLLLTLVVVTIVCLDLGYT) is a signal peptide. Cystine bridges form between cysteine 24–cysteine 42, cysteine 35–cysteine 59, cysteine 63–cysteine 74, and cysteine 75–cysteine 80.

This sequence belongs to the three-finger toxin family. Short-chain subfamily. Type IA cytotoxin sub-subfamily. Monomer in solution; Homodimer and oligomer in the presence of negatively charged lipids forming a pore with a size ranging between 20 and 30 Angstroms. Expressed by the venom gland.

It is found in the secreted. Its subcellular location is the target cell membrane. In terms of biological role, shows cytolytic activity on many different cells by forming pore in lipid membranes. In vivo, increases heart rate or kills the animal by cardiac arrest. In addition, it binds to heparin with high affinity, interacts with Kv channel-interacting protein 1 (KCNIP1) in a calcium-independent manner, and binds to integrin alpha-V/beta-3 (ITGAV/ITGB3) with moderate affinity. The polypeptide is Cytotoxin 5 (Naja atra (Chinese cobra)).